Reading from the N-terminus, the 177-residue chain is ATP synthase subunit delta (177 aa).

This sequence belongs to the ATPase delta chain family. In terms of assembly, F-type ATPases have 2 components, F(1) - the catalytic core - and F(0) - the membrane proton channel. F(1) has five subunits: alpha(3), beta(3), gamma(1), delta(1), epsilon(1). F(0) has three main subunits: a(1), b(2) and c(10-14). The alpha and beta chains form an alternating ring which encloses part of the gamma chain. F(1) is attached to F(0) by a central stalk formed by the gamma and epsilon chains, while a peripheral stalk is formed by the delta and b chains.

Its subcellular location is the cell inner membrane. Its function is as follows. F(1)F(0) ATP synthase produces ATP from ADP in the presence of a proton or sodium gradient. F-type ATPases consist of two structural domains, F(1) containing the extramembraneous catalytic core and F(0) containing the membrane proton channel, linked together by a central stalk and a peripheral stalk. During catalysis, ATP synthesis in the catalytic domain of F(1) is coupled via a rotary mechanism of the central stalk subunits to proton translocation. Functionally, this protein is part of the stalk that links CF(0) to CF(1). It either transmits conformational changes from CF(0) to CF(1) or is implicated in proton conduction. The polypeptide is ATP synthase subunit delta (Proteus mirabilis (strain HI4320)).